The chain runs to 638 residues: Threonine--tRNA ligase (638 aa).

One can recognise a TGS domain in the interval 1 to 61 (MPEITLPDGS…DNDSKVVIIT (61 aa)). The interval 242–533 (DHRKLGKKHS…LIEQYEAKFP (292 aa)) is catalytic. 3 residues coordinate Zn(2+): Cys-333, His-384, and His-510.

It belongs to the class-II aminoacyl-tRNA synthetase family. As to quaternary structure, homodimer. It depends on Zn(2+) as a cofactor.

The protein resides in the cytoplasm. It carries out the reaction tRNA(Thr) + L-threonine + ATP = L-threonyl-tRNA(Thr) + AMP + diphosphate + H(+). In terms of biological role, catalyzes the attachment of threonine to tRNA(Thr) in a two-step reaction: L-threonine is first activated by ATP to form Thr-AMP and then transferred to the acceptor end of tRNA(Thr). Also edits incorrectly charged L-seryl-tRNA(Thr). The protein is Threonine--tRNA ligase of Prochlorococcus marinus subsp. pastoris (strain CCMP1986 / NIES-2087 / MED4).